Here is a 388-residue protein sequence, read N- to C-terminus: Chorismate synthase (388 aa).

Residues R39 and R45 each coordinate NADP(+). Residues 130–132 (RSS), 251–252 (NA), G296, 311–315 (KPIPT), and R337 contribute to the FMN site.

The protein belongs to the chorismate synthase family. In terms of assembly, homotetramer. The cofactor is FMNH2.

The catalysed reaction is 5-O-(1-carboxyvinyl)-3-phosphoshikimate = chorismate + phosphate. It functions in the pathway metabolic intermediate biosynthesis; chorismate biosynthesis; chorismate from D-erythrose 4-phosphate and phosphoenolpyruvate: step 7/7. In terms of biological role, catalyzes the anti-1,4-elimination of the C-3 phosphate and the C-6 proR hydrogen from 5-enolpyruvylshikimate-3-phosphate (EPSP) to yield chorismate, which is the branch point compound that serves as the starting substrate for the three terminal pathways of aromatic amino acid biosynthesis. This reaction introduces a second double bond into the aromatic ring system. The chain is Chorismate synthase from Streptococcus pneumoniae (strain 70585).